A 454-amino-acid polypeptide reads, in one-letter code: Chromosomal replication initiator protein DnaA (454 aa).

Residues 1 to 76 (MNKLKTDLNL…IGASFRILAK (76 aa)) are domain I, interacts with DnaA modulators. Positions 76–113 (KNPKIIFAQESPGNGEKATGKKIKSLPREDKSSIFESK) are domain II. Positions 114–330 (GLNTKFSFEN…GALNRLCAYA (217 aa)) are domain III, AAA+ region. Glycine 158, glycine 160, lysine 161, and threonine 162 together coordinate ATP. The segment at 331–454 (SIHKEGKITL…KITEQLTSSQ (124 aa)) is domain IV, binds dsDNA.

Belongs to the DnaA family. As to quaternary structure, oligomerizes as a right-handed, spiral filament on DNA at oriC.

It localises to the cytoplasm. Functionally, plays an essential role in the initiation and regulation of chromosomal replication. ATP-DnaA binds to the origin of replication (oriC) to initiate formation of the DNA replication initiation complex once per cell cycle. Binds the DnaA box (a 9 base pair repeat at the origin) and separates the double-stranded (ds)DNA. Forms a right-handed helical filament on oriC DNA; dsDNA binds to the exterior of the filament while single-stranded (ss)DNA is stabiized in the filament's interior. The ATP-DnaA-oriC complex binds and stabilizes one strand of the AT-rich DNA unwinding element (DUE), permitting loading of DNA polymerase. After initiation quickly degrades to an ADP-DnaA complex that is not apt for DNA replication. Binds acidic phospholipids. This chain is Chromosomal replication initiator protein DnaA, found in Methylacidiphilum infernorum (isolate V4) (Methylokorus infernorum (strain V4)).